Here is a 632-residue protein sequence, read N- to C-terminus: MAU2 chromatid cohesion factor homolog (632 aa).

TPR repeat units follow at residues 453–486 (GGFYYVQGLHAFHKNSFHEAKRFLRETLKMANAE) and 493–526 (SCSLVLLSHVFLSIGNSKESMNMVTPAMQLASKI).

This sequence belongs to the SCC4/mau-2 family. In terms of assembly, interacts with Nipped-B to form the cohesin loading complex.

The protein localises to the nucleus. It localises to the nucleoplasm. Its function is as follows. Required for association of the cohesin complex with chromatin during interphase. Plays a role in sister chromatid cohesion and normal progression through prometaphase. This chain is MAU2 chromatid cohesion factor homolog, found in Drosophila melanogaster (Fruit fly).